A 557-amino-acid polypeptide reads, in one-letter code: Ras-specific guanine nucleotide-releasing factor RalGPS2 (557 aa).

Residues 49 to 287 form the Ras-GEF domain; that stretch reads TPEEYAGQIT…YKLSLKIEPG (239 aa). The disordered stretch occupies residues 283-314; that stretch reads KIEPGTSTPRSAASREDLVGPEVGASPQSGRK. A phosphoserine mark is found at S293, S296, S308, and S311. A Phosphothreonine modification is found at T326. Residues 327-330 carry the PXXP motif; sequence PPSP. Phosphoserine is present on residues S329 and S343. T361 carries the post-translational modification Phosphothreonine. Residues 368–409 are disordered; the sequence is RHLLDDSVMEPHAPSRGQAESSTLSSGISIGSSDGSELSEET. A Phosphoserine modification is found at S374. A compositionally biased stretch (low complexity) spans 387-403; sequence ESSTLSSGISIGSSDGS. In terms of domain architecture, PH spans 431-543; it reads AVTIQGVLRR…WFKHLSAACQ (113 aa). The interval 433 to 557 is required for stimulation of nucleotide exchange by RALA; the sequence is TIQGVLRRKT…QVPTNLMTFE (125 aa).

Interacts with the SH3 domains of GRB2 and PLCG1. Interacts with RALA.

It is found in the cytoplasm. The protein resides in the cell membrane. Guanine nucleotide exchange factor for the small GTPase RALA. May be involved in cytoskeletal organization. May also be involved in the stimulation of transcription in a Ras-independent fashion. The polypeptide is Ras-specific guanine nucleotide-releasing factor RalGPS2 (RALGPS2) (Macaca fascicularis (Crab-eating macaque)).